A 408-amino-acid polypeptide reads, in one-letter code: Putative transporter AmpG 2 (408 aa).

Helical transmembrane passes span 11–31, 49–69, 84–104, 110–130, 154–174, 177–197, 224–244, 261–281, 294–311, 353–373, and 382–402; these read IFNI…YLLT, IGLF…GPLL, YCLV…TSFN, IPFV…DMLI, FRIG…IISW, VYRT…FYPL, CIVI…LSIM, VGYK…GGFL, VLIY…LYFL, IALI…ISGY, and YFFI…LYLP.

This sequence belongs to the major facilitator superfamily.

Its subcellular location is the cell inner membrane. The polypeptide is Putative transporter AmpG 2 (ampG2) (Rickettsia prowazekii (strain Madrid E)).